The chain runs to 273 residues: 4-hydroxy-tetrahydrodipicolinate reductase (273 aa).

NAD(+)-binding positions include 12-17 and Glu38; that span reads GAGGRM. Arg39 lines the NADP(+) pocket. NAD(+) contacts are provided by residues 102 to 104 and 126 to 129; these read GTT and AANF. The active-site Proton donor/acceptor is His159. (S)-2,3,4,5-tetrahydrodipicolinate is bound at residue His160. Lys163 (proton donor) is an active-site residue. 169 to 170 lines the (S)-2,3,4,5-tetrahydrodipicolinate pocket; that stretch reads GT.

Belongs to the DapB family. As to quaternary structure, homotetramer.

It is found in the cytoplasm. The enzyme catalyses (S)-2,3,4,5-tetrahydrodipicolinate + NAD(+) + H2O = (2S,4S)-4-hydroxy-2,3,4,5-tetrahydrodipicolinate + NADH + H(+). It carries out the reaction (S)-2,3,4,5-tetrahydrodipicolinate + NADP(+) + H2O = (2S,4S)-4-hydroxy-2,3,4,5-tetrahydrodipicolinate + NADPH + H(+). It participates in amino-acid biosynthesis; L-lysine biosynthesis via DAP pathway; (S)-tetrahydrodipicolinate from L-aspartate: step 4/4. Its function is as follows. Catalyzes the conversion of 4-hydroxy-tetrahydrodipicolinate (HTPA) to tetrahydrodipicolinate. This chain is 4-hydroxy-tetrahydrodipicolinate reductase, found in Escherichia coli O127:H6 (strain E2348/69 / EPEC).